The following is a 178-amino-acid chain: ATP-dependent protease subunit HslV (178 aa).

Thr-8 is a catalytic residue. Residues Gly-163, Cys-166, and Thr-169 each contribute to the Na(+) site.

It belongs to the peptidase T1B family. HslV subfamily. A double ring-shaped homohexamer of HslV is capped on each side by a ring-shaped HslU homohexamer. The assembly of the HslU/HslV complex is dependent on binding of ATP.

Its subcellular location is the cytoplasm. It catalyses the reaction ATP-dependent cleavage of peptide bonds with broad specificity.. With respect to regulation, allosterically activated by HslU binding. Protease subunit of a proteasome-like degradation complex believed to be a general protein degrading machinery. The chain is ATP-dependent protease subunit HslV from Xylella fastidiosa (strain 9a5c).